Reading from the N-terminus, the 123-residue chain is MTIRTERVGNAIRKEVASMLTRGEIKDPRLGGFVNIQEVRVSPDLSYAKVYYTVFGESDQAGVADAWQRASGFLRNVIAKRLKLRHAPELRFELDHVADYSKRIDELLNGLEIPPADDSDETH.

Belongs to the RbfA family. In terms of assembly, monomer. Binds 30S ribosomal subunits, but not 50S ribosomal subunits or 70S ribosomes.

It localises to the cytoplasm. One of several proteins that assist in the late maturation steps of the functional core of the 30S ribosomal subunit. Associates with free 30S ribosomal subunits (but not with 30S subunits that are part of 70S ribosomes or polysomes). Required for efficient processing of 16S rRNA. May interact with the 5'-terminal helix region of 16S rRNA. The protein is Ribosome-binding factor A of Magnetococcus marinus (strain ATCC BAA-1437 / JCM 17883 / MC-1).